A 473-amino-acid chain; its full sequence is Glutamate--tRNA ligase 2 (473 aa).

Residues Pro11–Gly21 carry the 'HIGH' region motif. Over residues Lys113–Ser133 the composition is skewed to basic and acidic residues. The disordered stretch occupies residues Lys113–Pro136. The 'KMSKS' region signature appears at Lys240 to Arg244. Lys243 provides a ligand contact to ATP.

The protein belongs to the class-I aminoacyl-tRNA synthetase family. Glutamate--tRNA ligase type 1 subfamily. As to quaternary structure, monomer.

It localises to the cytoplasm. It catalyses the reaction tRNA(Glu) + L-glutamate + ATP = L-glutamyl-tRNA(Glu) + AMP + diphosphate. In terms of biological role, catalyzes the attachment of glutamate to tRNA(Glu) in a two-step reaction: glutamate is first activated by ATP to form Glu-AMP and then transferred to the acceptor end of tRNA(Glu). The sequence is that of Glutamate--tRNA ligase 2 from Brucella suis biovar 1 (strain 1330).